A 185-amino-acid polypeptide reads, in one-letter code: Probable chorismate pyruvate-lyase 1 (185 aa).

Arg-70, Leu-108, and Glu-166 together coordinate substrate.

The protein belongs to the UbiC family.

Its subcellular location is the cytoplasm. It carries out the reaction chorismate = 4-hydroxybenzoate + pyruvate. It participates in cofactor biosynthesis; ubiquinone biosynthesis. In terms of biological role, removes the pyruvyl group from chorismate, with concomitant aromatization of the ring, to provide 4-hydroxybenzoate (4HB) for the ubiquinone pathway. In Pseudomonas fluorescens (strain Pf0-1), this protein is Probable chorismate pyruvate-lyase 1.